Consider the following 299-residue polypeptide: Biotin transporter (299 aa).

A run of 10 helical transmembrane segments spans residues 2 to 22 (ALLI…GEYL), 26 to 46 (VDSY…FLPF), 56 to 76 (TISL…MLSF), 81 to 101 (YLTV…ITLI), 110 to 130 (LRWG…IIRY), 137 to 157 (FWVG…GMVG), 172 to 192 (AFAW…SLLG), 202 to 222 (LQWS…YFMW), 233 to 253 (TLGI…LAIW), and 256 to 276 (QPHW…LWVH). EamA domains lie at 3-128 (LLII…AGII) and 139-274 (VGLL…ASLW).

This sequence belongs to the drug/metabolite transporter (DMT) superfamily. 10 TMS drug/metabolite exporter (DME) (TC 2.A.7.3) family.

Its subcellular location is the cell inner membrane. The enzyme catalyses biotin(in) = biotin(out). Uptake of biotin. In Salmonella typhi, this protein is Biotin transporter.